A 387-amino-acid polypeptide reads, in one-letter code: Exodeoxyribonuclease 7 large subunit (387 aa).

Belongs to the XseA family. As to quaternary structure, heterooligomer composed of large and small subunits.

It localises to the cytoplasm. It catalyses the reaction Exonucleolytic cleavage in either 5'- to 3'- or 3'- to 5'-direction to yield nucleoside 5'-phosphates.. Functionally, bidirectionally degrades single-stranded DNA into large acid-insoluble oligonucleotides, which are then degraded further into small acid-soluble oligonucleotides. This Campylobacter jejuni subsp. doylei (strain ATCC BAA-1458 / RM4099 / 269.97) protein is Exodeoxyribonuclease 7 large subunit.